The chain runs to 105 residues: Nucleoid-associated protein Lm4b_02677 (105 aa).

Residues 1 to 16 (MRGMGNMQGMMKQMQK) show a composition bias toward low complexity. The segment at 1–23 (MRGMGNMQGMMKQMQKMQKEMAK) is disordered.

This sequence belongs to the YbaB/EbfC family. As to quaternary structure, homodimer.

Its subcellular location is the cytoplasm. The protein resides in the nucleoid. Its function is as follows. Binds to DNA and alters its conformation. May be involved in regulation of gene expression, nucleoid organization and DNA protection. This Listeria monocytogenes serotype 4b (strain CLIP80459) protein is Nucleoid-associated protein Lm4b_02677.